The primary structure comprises 106 residues: Small ribosomal subunit protein bS16 (106 aa).

The protein belongs to the bacterial ribosomal protein bS16 family.

The chain is Small ribosomal subunit protein bS16 from Protochlamydia amoebophila (strain UWE25).